A 215-amino-acid polypeptide reads, in one-letter code: N-(5'-phosphoribosyl)anthranilate isomerase (215 aa).

It belongs to the TrpF family.

The enzyme catalyses N-(5-phospho-beta-D-ribosyl)anthranilate = 1-(2-carboxyphenylamino)-1-deoxy-D-ribulose 5-phosphate. It functions in the pathway amino-acid biosynthesis; L-tryptophan biosynthesis; L-tryptophan from chorismate: step 3/5. The chain is N-(5'-phosphoribosyl)anthranilate isomerase from Ruegeria sp. (strain TM1040) (Silicibacter sp.).